A 242-amino-acid polypeptide reads, in one-letter code: MTTVSMRDMLQAGVHFGHQTRYWNPKMKPFIFGARNGVHIINLEHTVPMFNEALAFISNVASKKGKVLFVGTKRAAGEAIKEAAISCDQYYVDHRWLGGMLTNWKTVRQSIKRLKELESQSVDGTFDKLTKKEALMRTRELEKLEKSLGGIKNMGGLPDVLFVIGADHEHIAIKEANNLGIPVVAVVDTNSAPDGVNYIVPGNDDAMRAIRLYTTSVAAAANAGRGQDLAVQAEQDGFVEAE.

The protein belongs to the universal ribosomal protein uS2 family.

This chain is Small ribosomal subunit protein uS2, found in Shewanella oneidensis (strain ATCC 700550 / JCM 31522 / CIP 106686 / LMG 19005 / NCIMB 14063 / MR-1).